Reading from the N-terminus, the 473-residue chain is Double-stranded RNA-binding protein 7 (473 aa).

Pro residues predominate over residues 1–10 (MDMPPTPLPP). The tract at residues 1–22 (MDMPPTPLPPETANTSPAPNGA) is disordered. DRBM domains are found at residues 33–102 (VFKS…EIVK) and 118–185 (LCKN…AIQG). Composition is skewed to basic and acidic residues over residues 286–307 (KRVEAEPPRDIEMVQPDKENQH), 317–327 (DEARVEQEPSR), and 416–427 (VDARVVKEESPR). Disordered stretches follow at residues 286–329 (KRVE…SRDI) and 393–473 (QLNE…MSEE). Residues 433–450 (EATNMKETPKNSAVCNSP) show a composition bias toward polar residues.

Functionally, binds double-stranded RNA. The protein is Double-stranded RNA-binding protein 7 (DRB7) of Oryza sativa subsp. japonica (Rice).